A 127-amino-acid chain; its full sequence is Fluoride-specific ion channel FluC (127 aa).

4 helical membrane-spanning segments follow: residues 7–27 (VYVA…VAWV), 38–58 (GTLA…VYVV), 70–90 (LIMV…LEAW), and 102–122 (LAYI…GIAL). Na(+) contacts are provided by glycine 77 and threonine 80.

The protein belongs to the fluoride channel Fluc/FEX (TC 1.A.43) family.

The protein resides in the cell inner membrane. The enzyme catalyses fluoride(in) = fluoride(out). Na(+) is not transported, but it plays an essential structural role and its presence is essential for fluoride channel function. Its function is as follows. Fluoride-specific ion channel. Important for reducing fluoride concentration in the cell, thus reducing its toxicity. The sequence is that of Fluoride-specific ion channel FluC from Hahella chejuensis (strain KCTC 2396).